Consider the following 455-residue polypeptide: Virion host shutoff protein (455 aa).

This sequence belongs to the herpesviridae VHS protein family.

Its subcellular location is the virion. Its function is as follows. Minor structural protein that acts as an endoribonuclease during lytic infection. Degrades host mRNAs in the cytoplasm by cutting them at preferred sites, including some in regions of translation initiation. This chain is Virion host shutoff protein (17), found in Homo sapiens (Human).